The sequence spans 592 residues: Glycosyltransferase 25 family member (592 aa).

The signal sequence occupies residues 1–13 (MLALLLTTTIVSG). Residues asparagine 249 and asparagine 510 are each glycosylated (N-linked (GlcNAc...) asparagine). 2 stretches are compositionally biased toward basic and acidic residues: residues 552-563 (RIQEPKKGDKEQ) and 579-592 (GEHDLETKNRRSEL). The disordered stretch occupies residues 552–592 (RIQEPKKGDKEQLPNAPALLSESGIGQGEHDLETKNRRSEL). The Prevents secretion from ER signature appears at 589–592 (RSEL).

It belongs to the glycosyltransferase 25 family.

The protein resides in the endoplasmic reticulum lumen. The sequence is that of Glycosyltransferase 25 family member from Anopheles gambiae (African malaria mosquito).